Reading from the N-terminus, the 539-residue chain is Aluminum-activated malate transporter 13 (539 aa).

6 consecutive transmembrane segments (helical) span residues 57 to 77 (VGVALTLVSLLYLMEPFFEGV), 80 to 100 (NALWAVMTVVVVLEFSAGATL), 107 to 127 (GLGTLIAGSLAFFIEWVAIHS), 130 to 150 (ILGGIFIGTSVFTIGSMITYM), 165 to 185 (LVFLLTFNLITVSSYRVDTVI), and 192 to 212 (LYTIGMGIGICLFMSLLFFPI).

The protein belongs to the aromatic acid exporter (TC 2.A.85) family.

The protein resides in the membrane. Its function is as follows. Malate transporter. This is Aluminum-activated malate transporter 13 (ALMT13) from Arabidopsis thaliana (Mouse-ear cress).